The chain runs to 306 residues: tRNA-cytidine(32) 2-sulfurtransferase (306 aa).

The PP-loop motif signature appears at 49-54 (SGGKDS). [4Fe-4S] cluster is bound by residues cysteine 124, cysteine 127, and cysteine 215.

It belongs to the TtcA family. In terms of assembly, homodimer. The cofactor is Mg(2+). [4Fe-4S] cluster is required as a cofactor.

The protein localises to the cytoplasm. The enzyme catalyses cytidine(32) in tRNA + S-sulfanyl-L-cysteinyl-[cysteine desulfurase] + AH2 + ATP = 2-thiocytidine(32) in tRNA + L-cysteinyl-[cysteine desulfurase] + A + AMP + diphosphate + H(+). It participates in tRNA modification. Catalyzes the ATP-dependent 2-thiolation of cytidine in position 32 of tRNA, to form 2-thiocytidine (s(2)C32). The sulfur atoms are provided by the cysteine/cysteine desulfurase (IscS) system. The sequence is that of tRNA-cytidine(32) 2-sulfurtransferase from Azoarcus sp. (strain BH72).